The chain runs to 91 residues: MSFDRNQVPNWRPGYRFQYEPAQKGHVLLYPEGMIKLNDSASLIGGLIDGQRDVAAIISELEQQFPGVPEVADDIEQFMEVARAEHWIVLA.

The protein belongs to the PqqD family. In terms of assembly, monomer. Interacts with PqqE.

It functions in the pathway cofactor biosynthesis; pyrroloquinoline quinone biosynthesis. Its function is as follows. Functions as a PqqA binding protein and presents PqqA to PqqE, in the pyrroloquinoline quinone (PQQ) biosynthetic pathway. In Pseudomonas putida (strain ATCC 47054 / DSM 6125 / CFBP 8728 / NCIMB 11950 / KT2440), this protein is PqqA binding protein 1 (pqqD1).